Consider the following 334-residue polypeptide: Holliday junction branch migration complex subunit RuvB (334 aa).

A large ATPase domain (RuvB-L) region spans residues 4–186; sequence ADRLIAPISN…FGIVQRLEYY (183 aa). ATP contacts are provided by residues I25, R26, G67, K70, T71, T72, 133 to 135, R176, Y186, and R223; that span reads EDY. T71 lines the Mg(2+) pocket. A small ATPAse domain (RuvB-S) region spans residues 187–257; that stretch reads KVADLQHIVQ…TADRALNMLD (71 aa). Residues 260-334 are head domain (RuvB-H); that stretch reads HQGFDYMDRK…RAYLHFGIEK (75 aa). The DNA site is built by R315 and R320.

It belongs to the RuvB family. Homohexamer. Forms an RuvA(8)-RuvB(12)-Holliday junction (HJ) complex. HJ DNA is sandwiched between 2 RuvA tetramers; dsDNA enters through RuvA and exits via RuvB. An RuvB hexamer assembles on each DNA strand where it exits the tetramer. Each RuvB hexamer is contacted by two RuvA subunits (via domain III) on 2 adjacent RuvB subunits; this complex drives branch migration. In the full resolvosome a probable DNA-RuvA(4)-RuvB(12)-RuvC(2) complex forms which resolves the HJ.

The protein resides in the cytoplasm. The enzyme catalyses ATP + H2O = ADP + phosphate + H(+). The RuvA-RuvB-RuvC complex processes Holliday junction (HJ) DNA during genetic recombination and DNA repair, while the RuvA-RuvB complex plays an important role in the rescue of blocked DNA replication forks via replication fork reversal (RFR). RuvA specifically binds to HJ cruciform DNA, conferring on it an open structure. The RuvB hexamer acts as an ATP-dependent pump, pulling dsDNA into and through the RuvAB complex. RuvB forms 2 homohexamers on either side of HJ DNA bound by 1 or 2 RuvA tetramers; 4 subunits per hexamer contact DNA at a time. Coordinated motions by a converter formed by DNA-disengaged RuvB subunits stimulates ATP hydrolysis and nucleotide exchange. Immobilization of the converter enables RuvB to convert the ATP-contained energy into a lever motion, pulling 2 nucleotides of DNA out of the RuvA tetramer per ATP hydrolyzed, thus driving DNA branch migration. The RuvB motors rotate together with the DNA substrate, which together with the progressing nucleotide cycle form the mechanistic basis for DNA recombination by continuous HJ branch migration. Branch migration allows RuvC to scan DNA until it finds its consensus sequence, where it cleaves and resolves cruciform DNA. The polypeptide is Holliday junction branch migration complex subunit RuvB (Vibrio cholerae serotype O1 (strain ATCC 39315 / El Tor Inaba N16961)).